Reading from the N-terminus, the 945-residue chain is Protein translocase subunit SecA (945 aa).

Residues Q90, 108–112, and D509 contribute to the ATP site; that span reads GEGKT. A disordered region spans residues 533-568; it reads VKPEDGHKPPVPLQRRSESSGFGEDKDVTTDNSKPL. A compositionally biased stretch (basic and acidic residues) spans 547–561; sequence RRSESSGFGEDKDVT.

The protein belongs to the SecA family. Monomer and homodimer. Part of the essential Sec protein translocation apparatus which comprises SecA, SecYEG and auxiliary proteins SecDF. Other proteins may also be involved.

The protein localises to the cell inner membrane. It is found in the cellular thylakoid membrane. Its subcellular location is the cytoplasm. It catalyses the reaction ATP + H2O + cellular proteinSide 1 = ADP + phosphate + cellular proteinSide 2.. Part of the Sec protein translocase complex. Interacts with the SecYEG preprotein conducting channel. Has a central role in coupling the hydrolysis of ATP to the transfer of proteins into and across the cell membrane, serving as an ATP-driven molecular motor driving the stepwise translocation of polypeptide chains across the membrane. Its function is as follows. Probably participates in protein translocation into and across both the cytoplasmic and thylakoid membranes in cyanobacterial cells. This Prochlorococcus marinus (strain MIT 9211) protein is Protein translocase subunit SecA.